We begin with the raw amino-acid sequence, 89 residues long: Small ribosomal subunit protein uS17 (89 aa).

This sequence belongs to the universal ribosomal protein uS17 family. In terms of assembly, part of the 30S ribosomal subunit.

In terms of biological role, one of the primary rRNA binding proteins, it binds specifically to the 5'-end of 16S ribosomal RNA. This Coxiella burnetii (strain Dugway 5J108-111) protein is Small ribosomal subunit protein uS17.